Here is a 110-residue protein sequence, read N- to C-terminus: Iron-sulfur cluster insertion protein ErpA (110 aa).

Residues C38, C102, and C104 each coordinate iron-sulfur cluster.

The protein belongs to the HesB/IscA family. As to quaternary structure, homodimer. Iron-sulfur cluster serves as cofactor.

Its function is as follows. Required for insertion of 4Fe-4S clusters for at least IspG. This chain is Iron-sulfur cluster insertion protein ErpA, found in Marinobacter nauticus (strain ATCC 700491 / DSM 11845 / VT8) (Marinobacter aquaeolei).